The sequence spans 293 residues: MKI67 FHA domain-interacting nucleolar phosphoprotein (293 aa).

N-acetylalanine is present on Ala2. Residue Lys38 forms a Glycyl lysine isopeptide (Lys-Gly) (interchain with G-Cter in SUMO2) linkage. The region spanning 45–123 (GVVYVRHLPN…RLLECHFMPP (79 aa)) is the RRM domain. Arg114 bears the Omega-N-methylarginine; by PRMT1 and PRMT8 mark. Residue Lys139 forms a Glycyl lysine isopeptide (Lys-Gly) (interchain with G-Cter in SUMO2) linkage. Position 145 is a phosphoserine (Ser145). Residues Lys179 and Lys192 each participate in a glycyl lysine isopeptide (Lys-Gly) (interchain with G-Cter in SUMO2) cross-link. Polar residues predominate over residues 197 to 207 (SKTNRQTSTKG). The disordered stretch occupies residues 197–239 (SKTNRQTSTKGQVLRKKKKKVSGTLDTPEKTVDSQGPTPVCTP). Ser218 is subject to Phosphoserine. Thr223 is modified (phosphothreonine). Positions 226-269 (KTVDSQGPTPVCTPTFLERRKSQVAELNDDDKDDEIVFKQPISC) are interaction with MKI67. Ser230 bears the Phosphoserine mark. Thr234 and Thr238 each carry phosphothreonine. Omega-N-methylated arginine; by PRMT1 and PRMT8 is present on residues Arg244 and Arg245. The residue at position 247 (Ser247) is a Phosphoserine. Residue Lys271 forms a Glycyl lysine isopeptide (Lys-Gly) (interchain with G-Cter in SUMO1); alternate linkage. Residue Lys271 forms a Glycyl lysine isopeptide (Lys-Gly) (interchain with G-Cter in SUMO2); alternate linkage. Residues 271 to 293 (KEEIQETQTPTHSRKKRRRSSNQ) form a disordered region. A Phosphothreonine modification is found at Thr279. Positions 282–293 (HSRKKRRRSSNQ) are enriched in basic residues. The residue at position 284 (Arg284) is an Omega-N-methylarginine; by PRMT1 and PRMT8.

Binds to the FHA domain of MKI67; this interaction is enhanced in mitosis. In terms of processing, sequentially phosphorylated on Thr-238, Thr-234 and Ser-230. Thr-234 is phosphorylated only when Thr-238 is phosphorylated. Likewise, phosphorylation at Ser-230 requires that Thr-234 and Thr-238 are phosphorylated. Phosphorylation enhances MKI67 binding.

The protein resides in the nucleus. It is found in the nucleolus. It localises to the chromosome. This Homo sapiens (Human) protein is MKI67 FHA domain-interacting nucleolar phosphoprotein (NIFK).